We begin with the raw amino-acid sequence, 361 residues long: MAGNTIGQLFRVTTFGESHGLALGCIVDGVPPGIPLTEADLQHDLDRRRPGTSRYTTQRREPDQVKILSGVFEGVTTGTSIGLLIENTDQRSQDYSAIKDVFRPGHADYTYEQKYGLRDYRGGGRSSARETAMRVAAGAIAKKYLAEKFGIEIRGCLTQMGDIPLEIKDWSQVEQNPFFCPDPDKIDALDELMRALKKEGDSIGAKVTVVASGVPAGLGEPVFDRLDADIAHALMSINAVKGVEIGDGFDVVALRGSQNRDEITKDGFQSNHAGGILGGISSGQQIIAHMALKPTSSITVPGRTINRFGEEVEMITKGRHDPCVGIRAVPIAEAMLAIVLMDHLLRQRAQNADVKTDIPRW.

Residues R48 and R54 each contribute to the NADP(+) site. FMN-binding positions include 125–127 (RSS), 238–239 (NA), G278, 293–297 (KPTSS), and R319.

Belongs to the chorismate synthase family. As to quaternary structure, homotetramer. FMNH2 serves as cofactor.

It catalyses the reaction 5-O-(1-carboxyvinyl)-3-phosphoshikimate = chorismate + phosphate. It functions in the pathway metabolic intermediate biosynthesis; chorismate biosynthesis; chorismate from D-erythrose 4-phosphate and phosphoenolpyruvate: step 7/7. Catalyzes the anti-1,4-elimination of the C-3 phosphate and the C-6 proR hydrogen from 5-enolpyruvylshikimate-3-phosphate (EPSP) to yield chorismate, which is the branch point compound that serves as the starting substrate for the three terminal pathways of aromatic amino acid biosynthesis. This reaction introduces a second double bond into the aromatic ring system. The chain is Chorismate synthase from Escherichia coli O157:H7.